We begin with the raw amino-acid sequence, 51 residues long: Mitochondrial import receptor subunit TOM5 homolog (51 aa).

Position 1 is an N-acetylmethionine (M1). A Glycyl lysine isopeptide (Lys-Gly) (interchain with G-Cter in SUMO2) cross-link involves residue K10. The chain crosses the membrane as a helical span at residues S27–L45.

Belongs to the Tom5 family. In terms of assembly, forms part of the preprotein translocase complex of the outer mitochondrial membrane (TOM complex) which consists of at least 7 different proteins (TOMM5, TOMM6, TOMM7, TOMM20, TOMM22, TOMM40 and TOMM70).

The protein localises to the mitochondrion outer membrane. The protein is Mitochondrial import receptor subunit TOM5 homolog of Mus musculus (Mouse).